The sequence spans 112 residues: Large ribosomal subunit protein uL22 (112 aa).

Belongs to the universal ribosomal protein uL22 family. In terms of assembly, part of the 50S ribosomal subunit.

Its function is as follows. This protein binds specifically to 23S rRNA; its binding is stimulated by other ribosomal proteins, e.g. L4, L17, and L20. It is important during the early stages of 50S assembly. It makes multiple contacts with different domains of the 23S rRNA in the assembled 50S subunit and ribosome. In terms of biological role, the globular domain of the protein is located near the polypeptide exit tunnel on the outside of the subunit, while an extended beta-hairpin is found that lines the wall of the exit tunnel in the center of the 70S ribosome. The polypeptide is Large ribosomal subunit protein uL22 (Anaplasma phagocytophilum (strain HZ)).